Reading from the N-terminus, the 489-residue chain is Betaine aldehyde dehydrogenase (489 aa).

K(+) contacts are provided by threonine 26 and aspartate 93. NAD(+) is bound at residue 150–152 (GAW). Lysine 162 (charge relay system) is an active-site residue. 176-179 (KPSE) provides a ligand contact to NAD(+). Isoleucine 180 contributes to the K(+) binding site. 229–232 (GVET) is a binding site for NAD(+). Leucine 245 lines the K(+) pocket. Glutamate 251 acts as the Proton acceptor in catalysis. NAD(+)-binding residues include glycine 253, cysteine 285, and glutamate 386. Residue cysteine 285 is the Nucleophile of the active site. Cysteine 285 bears the Cysteine sulfenic acid (-SOH) mark. K(+) contacts are provided by lysine 456 and glycine 459. Catalysis depends on glutamate 463, which acts as the Charge relay system.

Belongs to the aldehyde dehydrogenase family. In terms of assembly, dimer of dimers. It depends on K(+) as a cofactor.

It carries out the reaction betaine aldehyde + NAD(+) + H2O = glycine betaine + NADH + 2 H(+). It functions in the pathway amine and polyamine biosynthesis; betaine biosynthesis via choline pathway; betaine from betaine aldehyde: step 1/1. Its function is as follows. Involved in the biosynthesis of the osmoprotectant glycine betaine. Catalyzes the irreversible oxidation of betaine aldehyde to the corresponding acid. This chain is Betaine aldehyde dehydrogenase, found in Paraburkholderia phytofirmans (strain DSM 17436 / LMG 22146 / PsJN) (Burkholderia phytofirmans).